The primary structure comprises 481 residues: 2-succinylbenzoate--CoA ligase (481 aa).

It belongs to the ATP-dependent AMP-binding enzyme family. MenE subfamily.

The catalysed reaction is 2-succinylbenzoate + ATP + CoA = 2-succinylbenzoyl-CoA + AMP + diphosphate. The protein operates within quinol/quinone metabolism; 1,4-dihydroxy-2-naphthoate biosynthesis; 1,4-dihydroxy-2-naphthoate from chorismate: step 5/7. Its pathway is quinol/quinone metabolism; menaquinone biosynthesis. Its function is as follows. Converts 2-succinylbenzoate (OSB) to 2-succinylbenzoyl-CoA (OSB-CoA). This Bacillus cereus (strain ATCC 10987 / NRS 248) protein is 2-succinylbenzoate--CoA ligase.